The chain runs to 89 residues: UPF0147 protein TV0625 (89 aa).

The protein belongs to the UPF0147 family.

This is UPF0147 protein TV0625 from Thermoplasma volcanium (strain ATCC 51530 / DSM 4299 / JCM 9571 / NBRC 15438 / GSS1).